Here is a 331-residue protein sequence, read N- to C-terminus: GTP 3',8-cyclase (331 aa).

Residues 9–233 (PFGRRITYLR…VRSSKVTGGP (225 aa)) enclose the Radical SAM core domain. GTP is bound at residue arginine 18. Cysteine 25 and cysteine 29 together coordinate [4Fe-4S] cluster. An S-adenosyl-L-methionine-binding site is contributed by tyrosine 31. Residue cysteine 32 participates in [4Fe-4S] cluster binding. GTP is bound at residue arginine 67. Glycine 71 contributes to the S-adenosyl-L-methionine binding site. Threonine 98 contributes to the GTP binding site. Residue serine 122 participates in S-adenosyl-L-methionine binding. Lysine 159 provides a ligand contact to GTP. Methionine 193 serves as a coordination point for S-adenosyl-L-methionine. [4Fe-4S] cluster-binding residues include cysteine 257 and cysteine 260. 262–264 (RVR) serves as a coordination point for GTP. Cysteine 274 contacts [4Fe-4S] cluster.

It belongs to the radical SAM superfamily. MoaA family. In terms of assembly, monomer and homodimer. It depends on [4Fe-4S] cluster as a cofactor.

The enzyme catalyses GTP + AH2 + S-adenosyl-L-methionine = (8S)-3',8-cyclo-7,8-dihydroguanosine 5'-triphosphate + 5'-deoxyadenosine + L-methionine + A + H(+). It participates in cofactor biosynthesis; molybdopterin biosynthesis. Its function is as follows. Catalyzes the cyclization of GTP to (8S)-3',8-cyclo-7,8-dihydroguanosine 5'-triphosphate. The sequence is that of GTP 3',8-cyclase from Ectopseudomonas mendocina (strain ymp) (Pseudomonas mendocina).